A 506-amino-acid chain; its full sequence is Lysine--tRNA ligase (506 aa).

Mg(2+) contacts are provided by glutamate 416 and glutamate 423.

The protein belongs to the class-II aminoacyl-tRNA synthetase family. In terms of assembly, homodimer. It depends on Mg(2+) as a cofactor.

It localises to the cytoplasm. The catalysed reaction is tRNA(Lys) + L-lysine + ATP = L-lysyl-tRNA(Lys) + AMP + diphosphate. This is Lysine--tRNA ligase from Xylella fastidiosa (strain M23).